Consider the following 241-residue polypeptide: MORN repeat-containing protein 3 (241 aa).

Residues 6 to 35 (CPQKSEPLWKEWDQKAQKNGLRHQVFAVNG) form an interaction with MDM2 region. MORN repeat units lie at residues 38–60 (YVGE…KNGA), 62–84 (YEGD…DQET), 91–113 (YSGW…PKEY), 114–136 (YEGD…NGDI), 137–159 (YEGQ…NGNR), 160–182 (YEGN…DHGQ), and 184–205 (FEGF…GRDE). The interaction with SIRT1 stretch occupies residues 76–100 (TLSLPDQETGKYKRAYSGWWKGDKK). The segment at 206-240 (APQPTQFPIPEVKILDPDGVLEEALAMFKKTKEEG) is interaction with TP53.

As to quaternary structure, interacts with MEIG1. Interacts with TP53, MDM2 and SIRT1; the interactions mediate post-transcriptional modifications of TP53 by MDM2 and SIRT1.

The protein localises to the cytoplasmic vesicle. It localises to the secretory vesicle. The protein resides in the acrosome. Its function is as follows. Assembles a suppression complex (suppresome) by tethering SIRT1 and MDM2 to regulate composite modifications of p53/TP53. Confers both deacetylation-mediated functional inactivation, by SIRT1, and ubiquitination-dependent degradation, by MDM2, of p53/TP53, promoting a proliferative and cell survival behaviors. May play a role in the regulation of spermatogenesis. The sequence is that of MORN repeat-containing protein 3 (MORN3) from Bos taurus (Bovine).